Reading from the N-terminus, the 475-residue chain is Glycogen synthase (475 aa).

Residue Lys-15 coordinates ADP-alpha-D-glucose.

The protein belongs to the glycosyltransferase 1 family. Bacterial/plant glycogen synthase subfamily.

It catalyses the reaction [(1-&gt;4)-alpha-D-glucosyl](n) + ADP-alpha-D-glucose = [(1-&gt;4)-alpha-D-glucosyl](n+1) + ADP + H(+). The protein operates within glycan biosynthesis; glycogen biosynthesis. In terms of biological role, synthesizes alpha-1,4-glucan chains using ADP-glucose. This Clostridium kluyveri (strain ATCC 8527 / DSM 555 / NBRC 12016 / NCIMB 10680 / K1) protein is Glycogen synthase.